Here is a 537-residue protein sequence, read N- to C-terminus: CTP synthase (537 aa).

Positions 1–267 (MTKYIFVTGG…DQIVCDHLKL (267 aa)) are amidoligase domain. Residue S13 coordinates CTP. Position 13 (S13) interacts with UTP. Residue 14 to 19 (SIGKGI) coordinates ATP. Residue Y54 coordinates L-glutamine. An ATP-binding site is contributed by D71. Residues D71 and E141 each contribute to the Mg(2+) site. CTP is bound by residues 148-150 (DIE), 188-193 (KTKPTQ), and K224. Residues 188 to 193 (KTKPTQ) and K224 contribute to the UTP site. Residue 240–242 (RDV) participates in ATP binding. Positions 292–535 (RIALVGKYVE…VTAAVKNKNQ (244 aa)) constitute a Glutamine amidotransferase type-1 domain. G354 provides a ligand contact to L-glutamine. The active-site Nucleophile; for glutamine hydrolysis is C381. L-glutamine is bound by residues 382–385 (LGMQ), E405, and R463. Residues H508 and E510 contribute to the active site.

Belongs to the CTP synthase family. In terms of assembly, homotetramer.

It catalyses the reaction UTP + L-glutamine + ATP + H2O = CTP + L-glutamate + ADP + phosphate + 2 H(+). It carries out the reaction L-glutamine + H2O = L-glutamate + NH4(+). The enzyme catalyses UTP + NH4(+) + ATP = CTP + ADP + phosphate + 2 H(+). Its pathway is pyrimidine metabolism; CTP biosynthesis via de novo pathway; CTP from UDP: step 2/2. Allosterically activated by GTP, when glutamine is the substrate; GTP has no effect on the reaction when ammonia is the substrate. The allosteric effector GTP functions by stabilizing the protein conformation that binds the tetrahedral intermediate(s) formed during glutamine hydrolysis. Inhibited by the product CTP, via allosteric rather than competitive inhibition. Catalyzes the ATP-dependent amination of UTP to CTP with either L-glutamine or ammonia as the source of nitrogen. Regulates intracellular CTP levels through interactions with the four ribonucleotide triphosphates. In Streptococcus equi subsp. equi (strain 4047), this protein is CTP synthase.